A 260-amino-acid polypeptide reads, in one-letter code: Triosephosphate isomerase (260 aa).

11-13 (NWK) is a binding site for substrate. The active-site Electrophile is His103. Glu175 acts as the Proton acceptor in catalysis. Residues Gly181, Ser220, and 241 to 242 (GG) each bind substrate.

The protein belongs to the triosephosphate isomerase family. Homodimer.

It localises to the cytoplasm. The enzyme catalyses D-glyceraldehyde 3-phosphate = dihydroxyacetone phosphate. The protein operates within carbohydrate biosynthesis; gluconeogenesis. It functions in the pathway carbohydrate degradation; glycolysis; D-glyceraldehyde 3-phosphate from glycerone phosphate: step 1/1. In terms of biological role, involved in the gluconeogenesis. Catalyzes stereospecifically the conversion of dihydroxyacetone phosphate (DHAP) to D-glyceraldehyde-3-phosphate (G3P). In Shewanella piezotolerans (strain WP3 / JCM 13877), this protein is Triosephosphate isomerase.